Here is a 297-residue protein sequence, read N- to C-terminus: ATP phosphoribosyltransferase (297 aa).

N-acetylmethionine is present on Met-1.

The protein belongs to the ATP phosphoribosyltransferase family.

It is found in the cytoplasm. It catalyses the reaction 1-(5-phospho-beta-D-ribosyl)-ATP + diphosphate = 5-phospho-alpha-D-ribose 1-diphosphate + ATP. The protein operates within amino-acid biosynthesis; L-histidine biosynthesis; L-histidine from 5-phospho-alpha-D-ribose 1-diphosphate: step 1/9. Catalyzes the condensation of ATP and 5-phosphoribose 1-diphosphate to form N'-(5'-phosphoribosyl)-ATP (PR-ATP). Has a crucial role in the pathway because the rate of histidine biosynthesis seems to be controlled primarily by regulation of the enzymatic activity. The chain is ATP phosphoribosyltransferase (HIS1) from Saccharomyces cerevisiae (strain ATCC 204508 / S288c) (Baker's yeast).